A 46-amino-acid chain; its full sequence is MIDALVLVAKLPEAYAIFDPLVDVLPVIPVLFLALAFVWQAAVGFR.

Residues 1-9 (MIDALVLVA) constitute a propeptide that is removed on maturation. Residues 10–19 (KLPEAYAIFD) are Lumenal-facing. The helical transmembrane segment at 20–39 (PLVDVLPVIPVLFLALAFVW) threads the bilayer. At 40-46 (QAAVGFR) the chain is on the cytoplasmic side.

It belongs to the PsbK family. In terms of assembly, PSII is composed of 1 copy each of membrane proteins PsbA, PsbB, PsbC, PsbD, PsbE, PsbF, PsbH, PsbI, PsbJ, PsbK, PsbL, PsbM, PsbT, PsbX, PsbY, PsbZ, Psb30/Ycf12, peripheral proteins PsbO, CyanoQ(PsbQ), PsbU, PsbV and a large number of cofactors. It forms dimeric complexes. Part of a photosystem II (PSII) assembly intermediate complex PSII-I; crystallized from a strain deleted of psbJ, it forms monomeric PSII before addition of the oxygen evolving complex. PSII-I includes 3 assembly factors not found in mature PSII (Psb27, Psb28 and Psb34). The cofactor is PSII binds multiple chlorophylls, carotenoids and specific lipids..

It localises to the cellular thylakoid membrane. One of the components of the core complex of photosystem II (PSII). PSII is a light-driven water:plastoquinone oxidoreductase that uses light energy to abstract electrons from H(2)O, generating O(2) and a proton gradient subsequently used for ATP formation. It consists of a core antenna complex that captures photons, and an electron transfer chain that converts photonic excitation into a charge separation. Required for association of PsbZ and Psb30/Ycf12 with PSII. The sequence is that of Photosystem II reaction center protein K from Thermosynechococcus vestitus (strain NIES-2133 / IAM M-273 / BP-1).